The following is a 495-amino-acid chain: MPSFQPIEAPKCPRCGKSVYAAEERLAGGYVFHKNCFKCGMCNKSLDSTNCTEHERELYCKTCHGRKFGPKGYGFGTGAGTLSMDNGSQFLRENGDVPSVRNGARLEPRAIARAPEGEGCPRCGGYVYAAEQMLARGRSWHKECFKCGTCKKGLDSILCCEAPDKNIYCKGCYAKKFGPKGYGYGQGGGALQSDCYAHDDGAPQIRAAIDVDKIQARPGEGCPRCGGVVYAAEQKLSKGREWHKKCFNCKDCHKTLDSINASDGPDRDVYCRTCYGKKWGPHGYGFACGSGFLQTDGLTEDQISANRPFYNPDTTSIKARDGEGCPRCGGAVFAAEQQLSKGKVWHKKCYNCADCHRPLDSVLACDGPDGDIHCRACYGKLFGPKGFGYGHAPTLVSTSGESTIQFPDGRPLAGPKTSGGCPRCGFAVFAAEQMISKTRIWHKRCFYCSDCRKSLDSTNLNDGPDGDIYCRACYGRNFGPKGVGYGLGAGALTTF.

The LIM zinc-binding 1 domain occupies 12–63; it reads CPRCGKSVYAAEERLAGGYVFHKNCFKCGMCNKSLDSTNCTEHERELYCKTC. The Nuclear localization signal motif lies at 66-71; it reads RKFGPK. The LIM zinc-binding 2 domain maps to 120–172; sequence CPRCGGYVYAAEQMLARGRSWHKECFKCGTCKKGLDSILCCEAPDKNIYCKGC. The Nuclear localization signal motif lies at 175–180; sequence KKFGPK. LIM zinc-binding domains follow at residues 222-274, 325-377, and 421-473; these read CPRC…CRTC and CPRC…CRAC.

As to expression, in the embryo, expression is restricted to the somatic, visceral, and pharyngeal muscles. Within the somatic musculature, expression is localized at the ends of muscles fibers at the point of attachment to the epidermis (at protein level). There is no expression in cardiac mesoderm or in fat body.

It is found in the cytoplasm. It localises to the nucleus. Plays a role in cell differentiation late in myogenesis. Transcription factor Mef2 is essential for expression. The chain is Muscle LIM protein Mlp84B from Drosophila melanogaster (Fruit fly).